The following is a 291-amino-acid chain: tRNA pseudouridine synthase B (291 aa).

The active-site Nucleophile is the Asp-41.

The protein belongs to the pseudouridine synthase TruB family. Type 1 subfamily.

The enzyme catalyses uridine(55) in tRNA = pseudouridine(55) in tRNA. Responsible for synthesis of pseudouridine from uracil-55 in the psi GC loop of transfer RNAs. This Parasynechococcus marenigrum (strain WH8102) protein is tRNA pseudouridine synthase B.